A 201-amino-acid polypeptide reads, in one-letter code: Zinc finger protein 239 (201 aa).

C2H2-type zinc fingers lie at residues tyrosine 6–histidine 28, phenylalanine 34–histidine 56, tyrosine 62–histidine 84, tyrosine 90–histidine 112, tyrosine 118–histidine 140, tyrosine 146–histidine 168, and tyrosine 174–histidine 196.

It belongs to the krueppel C2H2-type zinc-finger protein family. Preferentially expressed in transformed mouse cells.

The protein localises to the nucleus. May be involved in transcriptional regulation. The polypeptide is Zinc finger protein 239 (Znf239) (Mus musculus (Mouse)).